We begin with the raw amino-acid sequence, 445 residues long: Phosphoglucosamine mutase 1 (445 aa).

Serine 102 serves as the catalytic Phosphoserine intermediate. Mg(2+)-binding residues include serine 102, aspartate 241, aspartate 243, and aspartate 245. Serine 102 carries the phosphoserine modification.

The protein belongs to the phosphohexose mutase family. It depends on Mg(2+) as a cofactor. Post-translationally, activated by phosphorylation.

It carries out the reaction alpha-D-glucosamine 1-phosphate = D-glucosamine 6-phosphate. In terms of biological role, catalyzes the conversion of glucosamine-6-phosphate to glucosamine-1-phosphate. This Shewanella baltica (strain OS185) protein is Phosphoglucosamine mutase 1.